The following is a 323-amino-acid chain: ATP synthase gamma chain (323 aa).

Belongs to the ATPase gamma chain family. As to quaternary structure, F-type ATPases have 2 components, CF(1) - the catalytic core - and CF(0) - the membrane proton channel. CF(1) has five subunits: alpha(3), beta(3), gamma(1), delta(1), epsilon(1). CF(0) has three main subunits: a, b and c.

Its subcellular location is the cell inner membrane. Produces ATP from ADP in the presence of a proton gradient across the membrane. The gamma chain is believed to be important in regulating ATPase activity and the flow of protons through the CF(0) complex. This is ATP synthase gamma chain from Rickettsia peacockii (strain Rustic).